We begin with the raw amino-acid sequence, 1484 residues long: Chromatin remodeling regulator CECR2 (1484 aa).

Residues 170-241 are disordered; it reads VQGKSNGELS…RHGSQGPGQG (72 aa). Residues 197–209 show a composition bias toward basic residues; sequence TGKRRGRPPKRKK. A compositionally biased stretch (basic and acidic residues) spans 210-222; that stretch reads LQEEILLSEKQEE. Residues 223–234 are compositionally biased toward polar residues; sequence NSLASEPQTRHG. Ser422 bears the Phosphoserine mark. The Bromo domain occupies 434-538; it reads FELDDDFTAM…RCFHRAMMKH (105 aa). A Phosphothreonine modification is found at Thr546. Disordered stretches follow at residues 556–704, 796–825, 919–1053, 1165–1259, 1287–1320, and 1442–1484; these read EKRE…GPRL, GNHG…PRTL, GVPY…SYPG, VMGG…LFSD, AKVP…LDLD, and YRPS…LDQS. Ser571 bears the Phosphoserine mark. A compositionally biased stretch (low complexity) spans 605-614; that stretch reads SSGDDQSSSS. Ser1014 is modified (phosphoserine). Arg1197 and Arg1203 each carry asymmetric dimethylarginine. A compositionally biased stretch (pro residues) spans 1243–1254; that stretch reads SGPPASQPPPPR. The span at 1304-1320 shows a compositional bias: basic and acidic residues; that stretch reads DESMERPESPKEFLDLD. Ser1312 carries the post-translational modification Phosphoserine. Polar residues predominate over residues 1451 to 1469; it reads PVQSQASFPKTPTAATSQE. A compositionally biased stretch (pro residues) spans 1474 to 1484; it reads HKPPTLPLDQS.

Component of the CERF-1 ISWI chromatin remodeling complex (also called the CECR2-containing remodeling factor (CERF) complex) at least composed of CECR2 and SMARCA1. Component of the CERF-5 ISWI chromatin remodeling complex at least composed of SMARCA5/SNF2H and CECR2. LUZP1 is detected as part of the CERF-1 and CERF-5 complexes in embryonic stem (ES) cells where it is involved in complex stabilization but is not detected in the complexes in the testis. Interacts with CCAR2; CCAR2 may form part of the CERF-1 and/or CEF-5 ISWI chromatin remodeling complexes in ES cells. Interacts with acetylated lysine residues on histone H2A and H3 (in vitro). Interacts with LRPPRC. Highly expressed in skeletal muscle, thymus, placenta and lung. Expressed at lower level in brain, heart, colon, spleen, kidney.

Its subcellular location is the nucleus. Regulatory subunit of the ATP-dependent CERF-1 and CERF-5 ISWI chromatin remodeling complexes, which form ordered nucleosome arrays on chromatin and facilitate access to DNA during DNA-templated processes such as DNA replication, transcription, and repair. The complexes do not have the ability to slide mononucleosomes to the center of a DNA template. The CERF-1 ISWI chromatin remodeling complex has a lower ATP hydrolysis rate than the CERF-5 ISWI chromatin remodeling complex. Plays a role in various processes during development: required during embryogenesis for neural tube closure and inner ear development. In adults, required for spermatogenesis, via the formation of ISWI-type chromatin complexes. In histone-modifying complexes, CECR2 recognizes and binds acylated histones: binds histones that are acetylated and/or butyrylated. May also be involved through its interaction with LRPPRC in the integration of cytoskeletal network with vesicular trafficking, nucleocytosolic shuttling, transcription, chromosome remodeling and cytokinesis. The chain is Chromatin remodeling regulator CECR2 (CECR2) from Homo sapiens (Human).